The primary structure comprises 262 residues: uncharacterized protein (262 aa).

The chain crosses the membrane as a helical span at residues 13 to 35 (VVGALLTVVVIVTAAGIIYVISH).

It is found in the membrane. This is an uncharacterized protein from Archaeoglobus fulgidus (strain ATCC 49558 / DSM 4304 / JCM 9628 / NBRC 100126 / VC-16).